Here is a 128-residue protein sequence, read N- to C-terminus: Probable 4-amino-4-deoxy-L-arabinose-phosphoundecaprenol flippase subunit ArnF (128 aa).

The Cytoplasmic segment spans residues 1-2 (MG). A helical transmembrane segment spans residues 3-23 (LIWGLFSVIIASVAQLSLGFA). Residues 24-35 (ASHLPPMTHLWD) lie on the Periplasmic side of the membrane. The helical transmembrane segment at 36 to 56 (FIAALLAFGLDARILLLGLLG) threads the bilayer. Residues 57 to 76 (YLLSVFCWYKTLHKLALSKA) are Cytoplasmic-facing. A helical transmembrane segment spans residues 77–97 (YALLSMSYVLVWIASMVLPGW). Topologically, residues 98-100 (EGT) are periplasmic. Residues 101 to 121 (FSLKALLGVACIMSGLMLIFL) form a helical membrane-spanning segment. Residues 122–128 (PTTKQRY) lie on the Cytoplasmic side of the membrane.

This sequence belongs to the ArnF family. As to quaternary structure, heterodimer of ArnE and ArnF.

Its subcellular location is the cell inner membrane. Its pathway is bacterial outer membrane biogenesis; lipopolysaccharide biosynthesis. Translocates 4-amino-4-deoxy-L-arabinose-phosphoundecaprenol (alpha-L-Ara4N-phosphoundecaprenol) from the cytoplasmic to the periplasmic side of the inner membrane. The chain is Probable 4-amino-4-deoxy-L-arabinose-phosphoundecaprenol flippase subunit ArnF from Shigella boydii serotype 4 (strain Sb227).